A 310-amino-acid chain; its full sequence is HTH-type transcriptional activator TtdR (310 aa).

An HTH lysR-type domain is found at 6–63 (PLAKDLQVLVEIVHSGSFSAAAATLGQTPAFVTKRIQILENTLATTLLNRSARGVALT). A DNA-binding region (H-T-H motif) is located at residues 23–42 (FSAAAATLGQTPAFVTKRIQ).

This sequence belongs to the LysR transcriptional regulatory family.

Functionally, positive regulator required for L-tartrate-dependent anaerobic growth on glycerol. Induces expression of the ttdA-ttdB-ygjE operon. This is HTH-type transcriptional activator TtdR (ttdR) from Escherichia coli (strain K12).